Consider the following 119-residue polypeptide: Dihydroneopterin aldolase (119 aa).

Substrate contacts are provided by residues E21, Y53, and 72-73 (IE). K99 acts as the Proton donor/acceptor in catalysis.

This sequence belongs to the DHNA family.

It catalyses the reaction 7,8-dihydroneopterin = 6-hydroxymethyl-7,8-dihydropterin + glycolaldehyde. Its pathway is cofactor biosynthesis; tetrahydrofolate biosynthesis; 2-amino-4-hydroxy-6-hydroxymethyl-7,8-dihydropteridine diphosphate from 7,8-dihydroneopterin triphosphate: step 3/4. Catalyzes the conversion of 7,8-dihydroneopterin to 6-hydroxymethyl-7,8-dihydropterin. This chain is Dihydroneopterin aldolase (folB), found in Streptococcus pyogenes serotype M6 (strain ATCC BAA-946 / MGAS10394).